A 397-amino-acid chain; its full sequence is 3-ketoacyl-CoA thiolase, mitochondrial (397 aa).

A mitochondrion; not cleaved-targeting transit peptide spans 1 to 16 (MALLRGVFVVAAKRTP). Lysine 25 carries the post-translational modification N6-acetyllysine; alternate. N6-succinyllysine; alternate is present on lysine 25. At lysine 45 the chain carries N6-succinyllysine. Catalysis depends on cysteine 92, which acts as the Acyl-thioester intermediate. Threonine 119 carries the post-translational modification Phosphothreonine. Serine 121 carries the phosphoserine modification. A Phosphotyrosine modification is found at tyrosine 127. Threonine 136 is modified (phosphothreonine). Lysine 137 is modified (N6-acetyllysine; alternate). N6-succinyllysine; alternate is present on lysine 137. Residue serine 140 is modified to Phosphoserine. Residues lysine 143, lysine 171, lysine 191, and lysine 209 each carry the N6-acetyllysine; alternate modification. Residues lysine 143, lysine 171, lysine 191, and lysine 209 each carry the N6-succinyllysine; alternate modification. An N6-succinyllysine mark is found at lysine 211, lysine 212, and lysine 214. 2 residues coordinate CoA: arginine 224 and threonine 227. Lysine 234 carries the N6-acetyllysine; alternate modification. At lysine 234 the chain carries N6-succinyllysine; alternate. Lysine 240 is modified (N6-succinyllysine). Lysine 241 is subject to N6-acetyllysine. A CoA-binding site is contributed by serine 251. An N6-acetyllysine mark is found at lysine 269 and lysine 270. Lysine 305 carries the post-translational modification N6-acetyllysine; alternate. Lysine 305 bears the N6-succinyllysine; alternate mark. Serine 310 carries the post-translational modification Phosphoserine. Residue lysine 312 is modified to N6-acetyllysine; alternate. Residue lysine 312 is modified to N6-succinyllysine; alternate. Residue serine 333 is modified to Phosphoserine. Lysine 340 and lysine 375 each carry N6-acetyllysine. Cysteine 382 (proton donor/acceptor) is an active-site residue.

The protein belongs to the thiolase-like superfamily. Thiolase family. As to quaternary structure, homotetramer. Interacts with BNIP3.

The protein localises to the mitochondrion. It catalyses the reaction an acyl-CoA + acetyl-CoA = a 3-oxoacyl-CoA + CoA. It carries out the reaction 2 acetyl-CoA = acetoacetyl-CoA + CoA. The catalysed reaction is acetyl-CoA + H2O = acetate + CoA + H(+). The enzyme catalyses propanoyl-CoA + H2O = propanoate + CoA + H(+). It catalyses the reaction butanoyl-CoA + H2O = butanoate + CoA + H(+). It carries out the reaction hexanoyl-CoA + H2O = hexanoate + CoA + H(+). The catalysed reaction is octanoyl-CoA + H2O = octanoate + CoA + H(+). The enzyme catalyses decanoyl-CoA + H2O = decanoate + CoA + H(+). It catalyses the reaction dodecanoyl-CoA + H2O = dodecanoate + CoA + H(+). It carries out the reaction tetradecanoyl-CoA + H2O = tetradecanoate + CoA + H(+). The catalysed reaction is hexadecanoyl-CoA + H2O = hexadecanoate + CoA + H(+). It participates in lipid metabolism; fatty acid beta-oxidation. Its function is as follows. In the production of energy from fats, this is one of the enzymes that catalyzes the last step of the mitochondrial beta-oxidation pathway, an aerobic process breaking down fatty acids into acetyl-CoA. Using free coenzyme A/CoA, catalyzes the thiolytic cleavage of medium- to long-chain unbranched 3-oxoacyl-CoAs into acetyl-CoA and a fatty acyl-CoA shortened by two carbon atoms. Also catalyzes the condensation of two acetyl-CoA molecules into acetoacetyl-CoA and could be involved in the production of ketone bodies. Also displays hydrolase activity on various fatty acyl-CoAs. Thereby, could be responsible for the production of acetate in a side reaction to beta-oxidation. Abolishes BNIP3-mediated apoptosis and mitochondrial damage. The protein is 3-ketoacyl-CoA thiolase, mitochondrial (ACAA2) of Pongo abelii (Sumatran orangutan).